The sequence spans 248 residues: Ubiquinone biosynthesis O-methyltransferase (248 aa).

4 residues coordinate S-adenosyl-L-methionine: Arg41, Gly72, Asp93, and Met136.

Belongs to the methyltransferase superfamily. UbiG/COQ3 family.

The catalysed reaction is a 3-demethylubiquinol + S-adenosyl-L-methionine = a ubiquinol + S-adenosyl-L-homocysteine + H(+). It catalyses the reaction a 3-(all-trans-polyprenyl)benzene-1,2-diol + S-adenosyl-L-methionine = a 2-methoxy-6-(all-trans-polyprenyl)phenol + S-adenosyl-L-homocysteine + H(+). It participates in cofactor biosynthesis; ubiquinone biosynthesis. Functionally, O-methyltransferase that catalyzes the 2 O-methylation steps in the ubiquinone biosynthetic pathway. The sequence is that of Ubiquinone biosynthesis O-methyltransferase from Rhizobium rhizogenes (strain K84 / ATCC BAA-868) (Agrobacterium radiobacter).